Reading from the N-terminus, the 57-residue chain is Large ribosomal subunit protein bL32 (57 aa).

The tract at residues 1–23 is disordered; that stretch reads MAVPKKKTSKSKRDKRRATWRHK.

This sequence belongs to the bacterial ribosomal protein bL32 family.

The sequence is that of Large ribosomal subunit protein bL32 from Nostoc sp. (strain PCC 7120 / SAG 25.82 / UTEX 2576).